The primary structure comprises 645 residues: 1,4-alpha-glucan branching enzyme GlgB (645 aa).

The Nucleophile role is filled by aspartate 309. Glutamate 352 functions as the Proton donor in the catalytic mechanism. A disordered region spans residues 619–645; sequence VKTRKGSKKQDGSKTKVRSNVTSRGKR. Residues 636–645 are compositionally biased toward polar residues; sequence RSNVTSRGKR.

It belongs to the glycosyl hydrolase 13 family. GlgB subfamily. As to quaternary structure, monomer.

The enzyme catalyses Transfers a segment of a (1-&gt;4)-alpha-D-glucan chain to a primary hydroxy group in a similar glucan chain.. It functions in the pathway glycan biosynthesis; glycogen biosynthesis. Functionally, catalyzes the formation of the alpha-1,6-glucosidic linkages in glycogen by scission of a 1,4-alpha-linked oligosaccharide from growing alpha-1,4-glucan chains and the subsequent attachment of the oligosaccharide to the alpha-1,6 position. The polypeptide is 1,4-alpha-glucan branching enzyme GlgB (Bacillus mycoides (strain KBAB4) (Bacillus weihenstephanensis)).